Here is a 175-residue protein sequence, read N- to C-terminus: Orotate phosphoribosyltransferase (175 aa).

5-phospho-alpha-D-ribose 1-diphosphate contacts are provided by residues Arg88, Lys89, Lys92, and 114–122 (EDVVTTARG). Thr118 and Arg146 together coordinate orotate.

Belongs to the purine/pyrimidine phosphoribosyltransferase family. PyrE subfamily. In terms of assembly, homodimer. Mg(2+) serves as cofactor.

The enzyme catalyses orotidine 5'-phosphate + diphosphate = orotate + 5-phospho-alpha-D-ribose 1-diphosphate. The protein operates within pyrimidine metabolism; UMP biosynthesis via de novo pathway; UMP from orotate: step 1/2. Catalyzes the transfer of a ribosyl phosphate group from 5-phosphoribose 1-diphosphate to orotate, leading to the formation of orotidine monophosphate (OMP). In Methanocella arvoryzae (strain DSM 22066 / NBRC 105507 / MRE50), this protein is Orotate phosphoribosyltransferase.